Consider the following 905-residue polypeptide: Transcription termination factor 1 (905 aa).

Composition is skewed to basic and acidic residues over residues 1–16 (MEGE…PVSD) and 24–33 (IHKERPQKHS). The segment at 1–33 (MEGESSRFEIHTPVSDKKKKKCSIHKERPQKHS) is disordered. The tract at residues 1 to 223 (MEGESSRFEI…AHKNKSKKKK (223 aa)) is N-terminal region (NRD). Serine 65 bears the Phosphoserine mark. The tract at residues 151–443 (SHAHKSEALH…KSRPRQKKTQ (293 aa)) is disordered. 2 stretches are compositionally biased toward basic residues: residues 163 to 174 (VREKKNKKHQRK) and 215 to 226 (HKNKSKKKKKKS). A Phosphoserine modification is found at serine 240. Threonine 248 carries the post-translational modification Phosphothreonine. Composition is skewed to basic residues over residues 270 to 283 (THKK…KKKS), 330 to 339 (NKSKKKKKKS), and 385 to 401 (TKKK…KRAR). Phosphoserine is present on serine 403. A compositionally biased stretch (polar residues) spans 410 to 419 (PSKNSESTLF). Phosphotyrosine is present on tyrosine 476. Residues serine 478, serine 481, and serine 487 each carry the phosphoserine modification. The tract at residues 498 to 886 (LQEFIPNIKD…IEKESEGQAP (389 aa)) is may be involved in interaction with ARF. Myb-like domains follow at residues 612–661 (DVNN…SQIS) and 661–745 (SSQR…TEIL). Lysine 700 participates in a covalent cross-link: Glycyl lysine isopeptide (Lys-Gly) (interchain with G-Cter in SUMO2). At serine 872 the chain carries Phosphoserine.

Oligomer. The oligomeric structure enables to interact simultaneously with two separate DNA fragments. Interacts with BAZ2A/TIP5. Interacts with CAVIN1. Interacts (via the N-terminal region (NRD) and a C-terminal region) with CDKN2A/ARF; the interaction is direct. Interacts (via C-terminal region) with NPM1/B23.

Its subcellular location is the nucleus. The protein resides in the nucleolus. It localises to the nucleoplasm. Multifunctional nucleolar protein that terminates ribosomal gene transcription, mediates replication fork arrest and regulates RNA polymerase I transcription on chromatin. Plays a dual role in rDNA regulation, being involved in both activation and silencing of rDNA transcription. Interaction with BAZ2A/TIP5 recovers DNA-binding activity. The chain is Transcription termination factor 1 (TTF1) from Homo sapiens (Human).